The chain runs to 778 residues: LPS-assembly protein LptD (778 aa).

The first 23 residues, 1–23, serve as a signal peptide directing secretion; the sequence is MKTRYSVLSVAMTAAFYTQYAQA.

Belongs to the LptD family. In terms of assembly, component of the lipopolysaccharide transport and assembly complex. Interacts with LptE and LptA.

The protein resides in the cell outer membrane. Together with LptE, is involved in the assembly of lipopolysaccharide (LPS) at the surface of the outer membrane. This Actinobacillus pleuropneumoniae serotype 7 (strain AP76) protein is LPS-assembly protein LptD.